The following is a 482-amino-acid chain: Putative alpha-L-fucosidase (482 aa).

The first 16 residues, 1-16 (MIFLIFSILFLHLANC), serve as a signal peptide directing secretion. 4 N-linked (GlcNAc...) asparagine glycosylation sites follow: Asn182, Asn343, Asn359, and Asn419.

Belongs to the glycosyl hydrolase 29 family.

The enzyme catalyses an alpha-L-fucoside + H2O = L-fucose + an alcohol. Alpha-L-fucosidase is responsible for hydrolyzing the alpha-1,6-linked fucose joined to the reducing-end N-acetylglucosamine of the carbohydrate moieties of glycoproteins. The protein is Putative alpha-L-fucosidase of Caenorhabditis elegans.